Here is a 102-residue protein sequence, read N- to C-terminus: Urease subunit beta (102 aa).

This sequence belongs to the urease beta subunit family. Heterotrimer of UreA (gamma), UreB (beta) and UreC (alpha) subunits. Three heterotrimers associate to form the active enzyme.

It is found in the cytoplasm. It carries out the reaction urea + 2 H2O + H(+) = hydrogencarbonate + 2 NH4(+). It participates in nitrogen metabolism; urea degradation; CO(2) and NH(3) from urea (urease route): step 1/1. In Opitutus terrae (strain DSM 11246 / JCM 15787 / PB90-1), this protein is Urease subunit beta.